The sequence spans 368 residues: tRNA-specific 2-thiouridylase MnmA (368 aa).

Residues 11-18 (GMSGGVDS) and Met37 each bind ATP. The tract at residues 97–99 (NPD) is interaction with target base in tRNA. Cys102 acts as the Nucleophile in catalysis. Cys102 and Cys199 are disulfide-bonded. Position 127 (Gly127) interacts with ATP. Residues 149 to 151 (KDQ) are interaction with tRNA. Residue Cys199 is the Cysteine persulfide intermediate of the active site. The interaction with tRNA stretch occupies residues 311–312 (RY).

Belongs to the MnmA/TRMU family. Interacts with TusE.

It localises to the cytoplasm. It catalyses the reaction S-sulfanyl-L-cysteinyl-[protein] + uridine(34) in tRNA + AH2 + ATP = 2-thiouridine(34) in tRNA + L-cysteinyl-[protein] + A + AMP + diphosphate + H(+). Functionally, catalyzes the 2-thiolation of uridine at the wobble position (U34) of tRNA(Lys), tRNA(Glu) and tRNA(Gln), leading to the formation of s(2)U34, the first step of tRNA-mnm(5)s(2)U34 synthesis. Sulfur is provided by IscS, via a sulfur-relay system. Binds ATP and its substrate tRNAs. In Escherichia coli (strain SMS-3-5 / SECEC), this protein is tRNA-specific 2-thiouridylase MnmA.